The following is a 367-amino-acid chain: UDP-N-acetylglucosamine--N-acetylmuramyl-(pentapeptide) pyrophosphoryl-undecaprenol N-acetylglucosamine transferase (367 aa).

UDP-N-acetyl-alpha-D-glucosamine is bound by residues 15–17 (TGG), Asn-127, Arg-163, Ser-191, Ile-249, and Gln-294.

Belongs to the glycosyltransferase 28 family. MurG subfamily.

It is found in the cell inner membrane. It carries out the reaction di-trans,octa-cis-undecaprenyl diphospho-N-acetyl-alpha-D-muramoyl-L-alanyl-D-glutamyl-meso-2,6-diaminopimeloyl-D-alanyl-D-alanine + UDP-N-acetyl-alpha-D-glucosamine = di-trans,octa-cis-undecaprenyl diphospho-[N-acetyl-alpha-D-glucosaminyl-(1-&gt;4)]-N-acetyl-alpha-D-muramoyl-L-alanyl-D-glutamyl-meso-2,6-diaminopimeloyl-D-alanyl-D-alanine + UDP + H(+). It participates in cell wall biogenesis; peptidoglycan biosynthesis. In terms of biological role, cell wall formation. Catalyzes the transfer of a GlcNAc subunit on undecaprenyl-pyrophosphoryl-MurNAc-pentapeptide (lipid intermediate I) to form undecaprenyl-pyrophosphoryl-MurNAc-(pentapeptide)GlcNAc (lipid intermediate II). This chain is UDP-N-acetylglucosamine--N-acetylmuramyl-(pentapeptide) pyrophosphoryl-undecaprenol N-acetylglucosamine transferase, found in Burkholderia vietnamiensis (strain G4 / LMG 22486) (Burkholderia cepacia (strain R1808)).